Consider the following 589-residue polypeptide: Heterogeneous nuclear ribonucleoprotein L (589 aa).

Residues 1-16 (MSRRLLPRAEKRRRRL) show a composition bias toward basic residues. The disordered stretch occupies residues 1 to 100 (MSRRLLPRAE…NYDDPHKTPA (100 aa)). The span at 17 to 27 (EQRQQPDEQRR) shows a compositional bias: basic and acidic residues. The segment covering 38-54 (AGGGGGGGRYYGGGSEG) has biased composition (gly residues). The residue at position 52 (S52) is a Phosphoserine. Residues K59 and K62 each participate in a glycyl lysine isopeptide (Lys-Gly) (interchain with G-Cter in SUMO2) cross-link. Residues 69-90 (QHGGGGGGGGGAGAAGGGGGGE) are compositionally biased toward gly residues. S101 carries the post-translational modification Phosphoserine. The RRM 1 domain occupies 102–176 (PVVHIRGLID…HPAFVNYSTS (75 aa)). Residue K136 forms a Glycyl lysine isopeptide (Lys-Gly) (interchain with G-Cter in SUMO2) linkage. A Phosphoserine modification is found at S185. Residues 193–270 (SVLLFTILNP…CTLKIEYAKP (78 aa)) form the RRM 2 domain. N6-acetyllysine is present on K269. Polar residues predominate over residues 284–301 (DYTNPNLSGQGDPGSNPN). Residues 284-378 (DYTNPNLSGQ…PPPPPEYGPH (95 aa)) form a disordered region. Residues S291 and S298 each carry the phosphoserine modification. Residue K302 forms a Glycyl lysine isopeptide (Lys-Gly) (interchain with G-Cter in SUMO2) linkage. 2 positions are modified to asymmetric dimethylarginine: R354 and R358. The segment covering 364–375 (GHPPPPPPPPEY) has biased composition (pro residues). S381 bears the Phosphoserine mark. RRM domains lie at 382 to 478 (PVLM…KDFS) and 495 to 583 (RIQH…LCFS). At S544 the chain carries Phosphoserine; by CaMK4. Residue K568 forms a Glycyl lysine isopeptide (Lys-Gly) (interchain with G-Cter in SUMO2) linkage.

In terms of assembly, identified in a IGF2BP1-dependent mRNP granule complex containing untranslated mRNAs. Interacts with HNRNPLL. Interacts with APEX1; the interaction is DNA-dependent. Component of a complex with SETD2. Interacts with ELAVL1. Part of a transcription inhibitory ribonucleoprotein complex composed at least of the circular RNA circZNF827, ZNF827 and HNRNPK. Interacts with CHD8 in an RNA-dependent manner. Several isoelectric forms of the L protein are probably the results of post-translational modifications. In terms of processing, phosphorylation at Ser-544 by CaMK4 enhances interaction with a CaMK4-responsive RNA element (CaRRE1), and prevents inclusion of the stress axis-regulated exon (STREX) of the KCNMA1 potassium channel transcripts upon membrane depolarization.

The protein resides in the nucleus. It is found in the nucleoplasm. It localises to the cytoplasm. Functionally, splicing factor binding to exonic or intronic sites and acting as either an activator or repressor of exon inclusion. Exhibits a binding preference for CA-rich elements. Component of the heterogeneous nuclear ribonucleoprotein (hnRNP) complexes and associated with most nascent transcripts. Associates, together with APEX1, to the negative calcium responsive element (nCaRE) B2 of the APEX2 promoter. As part of a ribonucleoprotein complex composed at least of ZNF827, HNRNPK and the circular RNA circZNF827 that nucleates the complex on chromatin, may negatively regulate the transcription of genes involved in neuronal differentiation. Regulates alternative splicing of a core group of genes involved in neuronal differentiation, likely by mediating H3K36me3-coupled transcription elongation and co-transcriptional RNA processing via interaction with CHD8. In Homo sapiens (Human), this protein is Heterogeneous nuclear ribonucleoprotein L (HNRNPL).